The primary structure comprises 196 residues: Protein kinase OspG (196 aa).

It belongs to the protein kinase superfamily. In terms of processing, autophosphorylated.

Its subcellular location is the secreted. The protein localises to the host cell. Effector proteins function to alter host cell physiology and promote bacterial survival in host tissues. This protein is a kinase that is involved in down-regulation of the host innate response induced by invasive bacteria. This is Protein kinase OspG (ospG) from Shigella flexneri serotype X (strain 2002017).